The sequence spans 318 residues: Methionyl-tRNA formyltransferase (318 aa).

A (6S)-5,6,7,8-tetrahydrofolate-binding site is contributed by 112–115 (SILP).

It belongs to the Fmt family.

The catalysed reaction is L-methionyl-tRNA(fMet) + (6R)-10-formyltetrahydrofolate = N-formyl-L-methionyl-tRNA(fMet) + (6S)-5,6,7,8-tetrahydrofolate + H(+). Attaches a formyl group to the free amino group of methionyl-tRNA(fMet). The formyl group appears to play a dual role in the initiator identity of N-formylmethionyl-tRNA by promoting its recognition by IF2 and preventing the misappropriation of this tRNA by the elongation apparatus. This chain is Methionyl-tRNA formyltransferase, found in Haemophilus influenzae (strain PittGG).